The following is a 464-amino-acid chain: Chitobiosyldiphosphodolichol beta-mannosyltransferase (464 aa).

At 1–2 the chain is on the lumenal side; sequence MA. A helical membrane pass occupies residues 3-23; it reads ASCLVLLALCLLLPLLLLGGW. The Cytoplasmic portion of the chain corresponds to 24–99; it reads KRWRRGRTAR…ELQSLAVGPR (76 aa). The segment at residues 100–120 is an intramembrane region (helical); that stretch reads VFQYGVKVVFQAMYLLWKLMW. Topologically, residues 121-464 are cytoplasmic; sequence REPGAYIFLQ…QTVLPLVMDT (344 aa). S242 carries the phosphoserine modification. The interval 242-261 is disordered; it reads SPFRARSEPEDPATERSAFT.

This sequence belongs to the glycosyltransferase group 1 family. Glycosyltransferase 33 subfamily.

Its subcellular location is the endoplasmic reticulum membrane. It catalyses the reaction an N,N'-diacetylchitobiosyl-diphospho-di-trans,poly-cis-dolichol + GDP-alpha-D-mannose = a beta-D-Man-(1-&gt;4)-beta-D-GlcNAc-(1-&gt;4)-alpha-D-GlcNAc-diphospho-di-trans,poly-cis-dolichol + GDP + H(+). Its pathway is protein modification; protein glycosylation. In terms of biological role, mannosyltransferase that operates in the biosynthetic pathway of dolichol-linked oligosaccharides, the glycan precursors employed in protein asparagine (N)-glycosylation. The assembly of dolichol-linked oligosaccharides begins on the cytosolic side of the endoplasmic reticulum membrane and finishes in its lumen. The sequential addition of sugars to dolichol pyrophosphate produces dolichol-linked oligosaccharides containing fourteen sugars, including two GlcNAcs, nine mannoses and three glucoses. Once assembled, the oligosaccharide is transferred from the lipid to nascent proteins by oligosaccharyltransferases. Catalyzes, on the cytoplasmic face of the endoplasmic reticulum, the addition of the first mannose residues to the dolichol-linked oligosaccharide chain, to produce Man1GlcNAc(2)-PP-dolichol core oligosaccharide. Man1GlcNAc(2)-PP-dolichol is a substrate for ALG2, the following enzyme in the biosynthetic pathway. The protein is Chitobiosyldiphosphodolichol beta-mannosyltransferase of Pongo abelii (Sumatran orangutan).